The following is a 658-amino-acid chain: Threonine--tRNA ligase (658 aa).

In terms of domain architecture, TGS spans 1-61; the sequence is MSDVRVIIQR…KDGETVEAVE (61 aa). The interval 259–554 is catalytic; that stretch reads DHRKLGSELD…LLEHYAGAMP (296 aa). The Zn(2+) site is built by C353, H404, and H531.

This sequence belongs to the class-II aminoacyl-tRNA synthetase family. In terms of assembly, homodimer. Requires Zn(2+) as cofactor.

It is found in the cytoplasm. The catalysed reaction is tRNA(Thr) + L-threonine + ATP = L-threonyl-tRNA(Thr) + AMP + diphosphate + H(+). In terms of biological role, catalyzes the attachment of threonine to tRNA(Thr) in a two-step reaction: L-threonine is first activated by ATP to form Thr-AMP and then transferred to the acceptor end of tRNA(Thr). Also edits incorrectly charged L-seryl-tRNA(Thr). In Streptomyces coelicolor (strain ATCC BAA-471 / A3(2) / M145), this protein is Threonine--tRNA ligase.